A 42-amino-acid polypeptide reads, in one-letter code: Photosystem II reaction center protein J (42 aa).

Residues 10–30 (IPLWLVGTVVGIAALTLLSVF) traverse the membrane as a helical segment.

Belongs to the PsbJ family. In terms of assembly, PSII is composed of 1 copy each of membrane proteins PsbA, PsbB, PsbC, PsbD, PsbE, PsbF, PsbH, PsbI, PsbJ, PsbK, PsbL, PsbM, PsbT, PsbX, PsbY, PsbZ, Psb30/Ycf12, at least 3 peripheral proteins of the oxygen-evolving complex and a large number of cofactors. It forms dimeric complexes.

The protein localises to the plastid. The protein resides in the chloroplast thylakoid membrane. Functionally, one of the components of the core complex of photosystem II (PSII). PSII is a light-driven water:plastoquinone oxidoreductase that uses light energy to abstract electrons from H(2)O, generating O(2) and a proton gradient subsequently used for ATP formation. It consists of a core antenna complex that captures photons, and an electron transfer chain that converts photonic excitation into a charge separation. The chain is Photosystem II reaction center protein J from Tupiella akineta (Green alga).